A 226-amino-acid polypeptide reads, in one-letter code: Acyl-protein thioesterase 1 homolog 1 (226 aa).

Residues serine 121, aspartate 174, and histidine 206 each act as charge relay system in the active site.

Belongs to the AB hydrolase superfamily. AB hydrolase 2 family.

It is found in the cytoplasm. The protein localises to the nucleus. The catalysed reaction is S-hexadecanoyl-L-cysteinyl-[protein] + H2O = L-cysteinyl-[protein] + hexadecanoate + H(+). In terms of biological role, hydrolyzes fatty acids from S-acylated cysteine residues in proteins with a strong preference for palmitoylated G-alpha proteins over other acyl substrates. Mediates the deacylation of G-alpha proteins such as GPA1 in vivo, but has weak or no activity toward palmitoylated Ras proteins. Has weak lysophospholipase activity in vitro; however such activity may not exist in vivo. In Dictyostelium discoideum (Social amoeba), this protein is Acyl-protein thioesterase 1 homolog 1.